A 491-amino-acid chain; its full sequence is Cytochrome P450 2H2 (491 aa).

Cys-436 provides a ligand contact to heme.

The protein belongs to the cytochrome P450 family. The cofactor is heme.

The protein localises to the endoplasmic reticulum membrane. Its subcellular location is the microsome membrane. It carries out the reaction an organic molecule + reduced [NADPH--hemoprotein reductase] + O2 = an alcohol + oxidized [NADPH--hemoprotein reductase] + H2O + H(+). Functionally, cytochromes P450 are a group of heme-thiolate monooxygenases. In liver microsomes, this enzyme is involved in an NADPH-dependent electron transport pathway. It oxidizes a variety of structurally unrelated compounds, including steroids, fatty acids, and xenobiotics. The protein is Cytochrome P450 2H2 (CYP2H2) of Gallus gallus (Chicken).